A 153-amino-acid chain; its full sequence is Regulatory protein RecX (153 aa).

It belongs to the RecX family.

Its subcellular location is the cytoplasm. In terms of biological role, modulates RecA activity. This is Regulatory protein RecX from Pseudomonas aeruginosa (strain UCBPP-PA14).